The primary structure comprises 397 residues: Phosphoglycerate kinase (397 aa).

Residues 21–23 (DFN), Arg-36, 59–62 (HCGR), Arg-118, and Arg-151 contribute to the substrate site. ATP is bound by residues Lys-201, Glu-323, and 353–356 (GGDT).

The protein belongs to the phosphoglycerate kinase family. As to quaternary structure, monomer.

It is found in the cytoplasm. The enzyme catalyses (2R)-3-phosphoglycerate + ATP = (2R)-3-phospho-glyceroyl phosphate + ADP. Its pathway is carbohydrate degradation; glycolysis; pyruvate from D-glyceraldehyde 3-phosphate: step 2/5. The sequence is that of Phosphoglycerate kinase from Bartonella tribocorum (strain CIP 105476 / IBS 506).